A 260-amino-acid polypeptide reads, in one-letter code: Thiazole synthase (260 aa).

The active-site Schiff-base intermediate with DXP is Lys-96. 1-deoxy-D-xylulose 5-phosphate-binding positions include Gly-157, 184 to 185, and 206 to 207; these read AG and NT.

Belongs to the ThiG family. In terms of assembly, homotetramer. Forms heterodimers with either ThiH or ThiS.

The protein resides in the cytoplasm. The enzyme catalyses [ThiS sulfur-carrier protein]-C-terminal-Gly-aminoethanethioate + 2-iminoacetate + 1-deoxy-D-xylulose 5-phosphate = [ThiS sulfur-carrier protein]-C-terminal Gly-Gly + 2-[(2R,5Z)-2-carboxy-4-methylthiazol-5(2H)-ylidene]ethyl phosphate + 2 H2O + H(+). Its pathway is cofactor biosynthesis; thiamine diphosphate biosynthesis. Functionally, catalyzes the rearrangement of 1-deoxy-D-xylulose 5-phosphate (DXP) to produce the thiazole phosphate moiety of thiamine. Sulfur is provided by the thiocarboxylate moiety of the carrier protein ThiS. In vitro, sulfur can be provided by H(2)S. This Rhodopseudomonas palustris (strain BisB18) protein is Thiazole synthase.